We begin with the raw amino-acid sequence, 200 residues long: MSKYAGIVLAGGMSSRFGEPKALAIWKGTTFVEHIVKVMGNTLQDIVVISHTDIKERVEQFVQVPVIEDIPHYKGNGPLAGIVSGMEYIEADWYAIMPCDAPNVSHEWFTILLEQTNNEYDAVVPIINGRKQPLLAAYHNRVKEKIYALLQEEKRSMGQLLSQCNVKYVSGEDVQANADWFINVNTKEEYGQAQKDLSNE.

Residues 9–11 (LAG), Lys-21, Asp-69, and Asp-100 contribute to the GTP site. Asp-100 is a Mg(2+) binding site.

The protein belongs to the MobA family. Mg(2+) serves as cofactor.

It is found in the cytoplasm. It catalyses the reaction Mo-molybdopterin + GTP + H(+) = Mo-molybdopterin guanine dinucleotide + diphosphate. Its function is as follows. Transfers a GMP moiety from GTP to Mo-molybdopterin (Mo-MPT) cofactor (Moco or molybdenum cofactor) to form Mo-molybdopterin guanine dinucleotide (Mo-MGD) cofactor. This is Probable molybdenum cofactor guanylyltransferase from Bacillus cereus (strain B4264).